The sequence spans 734 residues: Probable carboxypeptidase X1 (734 aa).

The first 20 residues, 1 to 20 (MWGLLLALAAFAPAVGPALG), serve as a signal peptide directing secretion. Residues 30 to 62 (AQPGTTKVPGSTPALHSSPAQPPAETANGTSEQ) form a disordered region. Polar residues predominate over residues 32 to 48 (PGTTKVPGSTPALHSSP). N-linked (GlcNAc...) asparagine glycosylation is found at Asn-57, Asn-210, Asn-220, and Asn-318. One can recognise an F5/8 type C domain in the interval 113–274 (TGCPPLGLES…PCLRAEILAC (162 aa)). Cys-115 and Cys-274 are oxidised to a cystine. Positions 298-621 (QHHNYKAMRK…DALLTYLEQV (324 aa)) constitute a Peptidase M14 domain. His-360 and Glu-363 together coordinate Zn(2+). Residues Asn-428 and Asn-472 are each glycosylated (N-linked (GlcNAc...) asparagine). Zn(2+) is bound at residue His-498. Catalysis depends on Glu-591, which acts as the Proton donor/acceptor.

It belongs to the peptidase M14 family. Zn(2+) is required as a cofactor.

It localises to the secreted. In terms of biological role, may be involved in cell-cell interactions. No carboxypeptidase activity was found yet. This Homo sapiens (Human) protein is Probable carboxypeptidase X1 (CPXM1).